Here is a 331-residue protein sequence, read N- to C-terminus: DNA polymerase IV (331 aa).

The UmuC domain occupies 1–174 (FFAAVEMRDN…LPLAKIPGVG (174 aa)). A Mg(2+)-binding site is contributed by aspartate 92. Residue glutamate 93 is part of the active site.

It belongs to the DNA polymerase type-Y family. As to quaternary structure, monomer. It depends on Mg(2+) as a cofactor.

It is found in the cytoplasm. It catalyses the reaction DNA(n) + a 2'-deoxyribonucleoside 5'-triphosphate = DNA(n+1) + diphosphate. Functionally, poorly processive, error-prone DNA polymerase involved in untargeted mutagenesis. Copies undamaged DNA at stalled replication forks, which arise in vivo from mismatched or misaligned primer ends. These misaligned primers can be extended by PolIV. Exhibits no 3'-5' exonuclease (proofreading) activity. May be involved in translesional synthesis, in conjunction with the beta clamp from PolIII. This is DNA polymerase IV from Escherichia fergusonii.